The following is a 515-amino-acid chain: 3-[(3aS,4S,7aS)-7a-methyl-1,5-dioxo-octahydro-1H-inden-4-yl]propanoyl:CoA ligase (515 aa).

ATP contacts are provided by residues threonine 185–lysine 193, aspartate 398, arginine 413, and lysine 504.

This sequence belongs to the ATP-dependent AMP-binding enzyme family.

The catalysed reaction is 3-[(3aS,4S,7aS)-7a-methyl-1,5-dioxo-octahydro-1H-inden-4-yl]propanoate + ATP + CoA = 3-[(3aS,4S,7aS)-7a-methyl-1,5-dioxo-octahydro-1H-inden-4-yl]propanoyl-CoA + AMP + diphosphate. In terms of biological role, involved in the catabolism of the rings C and D of cholesterol. Catalyzes the ATP-dependent CoA thioesterification of 3aalpha-H-4alpha(3'-propanoate)-7abeta-methylhexahydro-1,5-indanedione (HIP). The polypeptide is 3-[(3aS,4S,7aS)-7a-methyl-1,5-dioxo-octahydro-1H-inden-4-yl]propanoyl:CoA ligase (Rhodococcus jostii (strain RHA1)).